The chain runs to 218 residues: MENDCTVNIVSLEKDRDVSEASAESQSESTLSNSLDSGVTAETSRSDADSKLDECTAWTNEKHNSYLDYLESSFVRQLYSLLGGGTQRLSRTRDVQSNSHKSADQFTVLQNGCWQKVNFGKKQSCLETSSEFRFHRNSLRNKPENSNGNYTMGTTVQGDVLCHDETKHSEASGQNFREEEEEEEKGEVSKKREREANNDDSSLKEDQVVPVRMVKPRT.

2 disordered regions span residues 1–51 (MEND…ADSK) and 166–218 (TKHS…KPRT). Residues 20 to 37 (EASAESQSESTLSNSLDS) show a composition bias toward low complexity. The segment covering 186-207 (GEVSKKREREANNDDSSLKEDQ) has biased composition (basic and acidic residues).

It localises to the nucleus. Together with COR27, involved in central circadian clock regulation and in flowering promotion, by binding to the chromatin of clock-associated evening genes TOC1, PRR5, ELF4 and cold-responsive genes in order to repress their transcription. Negative regulator of freezing tolerance. This chain is Cold-regulated protein 28, found in Arabidopsis thaliana (Mouse-ear cress).